The primary structure comprises 152 residues: 6,7-dimethyl-8-ribityllumazine synthase (152 aa).

5-amino-6-(D-ribitylamino)uracil-binding positions include phenylalanine 21, 55 to 57 (AFE), and 79 to 81 (CVI). A (2S)-2-hydroxy-3-oxobutyl phosphate-binding site is contributed by 84–85 (ST). The Proton donor role is filled by histidine 87. Phenylalanine 112 is a binding site for 5-amino-6-(D-ribitylamino)uracil. Arginine 126 lines the (2S)-2-hydroxy-3-oxobutyl phosphate pocket.

It belongs to the DMRL synthase family. Forms an icosahedral capsid composed of 60 subunits, arranged as a dodecamer of pentamers.

The catalysed reaction is (2S)-2-hydroxy-3-oxobutyl phosphate + 5-amino-6-(D-ribitylamino)uracil = 6,7-dimethyl-8-(1-D-ribityl)lumazine + phosphate + 2 H2O + H(+). It participates in cofactor biosynthesis; riboflavin biosynthesis; riboflavin from 2-hydroxy-3-oxobutyl phosphate and 5-amino-6-(D-ribitylamino)uracil: step 1/2. Functionally, catalyzes the formation of 6,7-dimethyl-8-ribityllumazine by condensation of 5-amino-6-(D-ribitylamino)uracil with 3,4-dihydroxy-2-butanone 4-phosphate. This is the penultimate step in the biosynthesis of riboflavin. The sequence is that of 6,7-dimethyl-8-ribityllumazine synthase from Staphylococcus saprophyticus subsp. saprophyticus (strain ATCC 15305 / DSM 20229 / NCIMB 8711 / NCTC 7292 / S-41).